The chain runs to 264 residues: Mediator of RNA polymerase II transcription subunit 4 (264 aa).

Residues 183–264 (LTKLPGQEDG…DLDLFNPDEF (82 aa)) form a disordered region. A compositionally biased stretch (basic and acidic residues) spans 200–225 (NEDKNIVKDAEGAEGEIRQDDKKEDD). Over residues 236-264 (AEGDEDKNAGEDEDEAMDSDLDLFNPDEF) the composition is skewed to acidic residues.

This sequence belongs to the Mediator complex subunit 4 family. Component of the Mediator complex.

Its subcellular location is the nucleus. Component of the Mediator complex, a coactivator involved in the regulated transcription of nearly all RNA polymerase II-dependent genes. Mediator functions as a bridge to convey information from gene-specific regulatory proteins to the basal RNA polymerase II transcription machinery. Mediator is recruited to promoters by direct interactions with regulatory proteins and serves as a scaffold for the assembly of a functional preinitiation complex with RNA polymerase II and the general transcription factors. The chain is Mediator of RNA polymerase II transcription subunit 4 (MED4) from Candida glabrata (strain ATCC 2001 / BCRC 20586 / JCM 3761 / NBRC 0622 / NRRL Y-65 / CBS 138) (Yeast).